Reading from the N-terminus, the 363-residue chain is Outer membrane protein P2 (363 aa).

The first 20 residues, 1–20, serve as a signal peptide directing secretion; the sequence is MKKTLAALIVGAFAASAANA.

Belongs to the Gram-negative porin family. As to quaternary structure, homotrimer.

The protein localises to the cell outer membrane. Functionally, forms pores that allow passive diffusion of small molecules across the outer membrane. In Haemophilus influenzae, this protein is Outer membrane protein P2 (ompP2).